Consider the following 283-residue polypeptide: Probable 3-deoxy-manno-octulosonic acid transferase (283 aa).

It localises to the cytoplasm. It carries out the reaction an alpha-Kdo-(2-&gt;4)-alpha-Kdo-(2-&gt;6)-lipid IVA + CMP-3-deoxy-beta-D-manno-octulosonate = an alpha-Kdo-(2-&gt;4)-alpha-Kdo-(2-&gt;4)-alpha-Kdo-(2-&gt;6)-lipid IVA + CMP + H(+). It catalyses the reaction alpha-Kdo-(2-&gt;4)-alpha-Kdo-(2-&gt;6)-lipid IVA (E. coli) + CMP-3-deoxy-beta-D-manno-octulosonate = alpha-Kdo-(2-&gt;4)-alpha-Kdo-(2-&gt;4)-alpha-Kdo-(2-&gt;6)-lipid IVA + CMP + H(+). It functions in the pathway bacterial outer membrane biogenesis; LPS core biosynthesis. Its pathway is bacterial outer membrane biogenesis; LOS core biosynthesis. In terms of biological role, involved in the biosynthesis of the core oligosaccharide region of lipopolysaccharide (LPS). Required for the addition of 3-deoxy-D-manno-oct-2-ulosonic acid III (KdoIII) to the KdoII residue of the inner lipopolysaccharide core. May also play a role in a lipooligosaccharide (LOS) biosynthesis pathway. The sequence is that of Probable 3-deoxy-manno-octulosonic acid transferase from Escherichia coli (strain K12).